Here is a 523-residue protein sequence, read N- to C-terminus: Transcription factor MYB120 (523 aa).

HTH myb-type domains lie at 23-75 and 76-130; these read GVIL…ANHL and RPNL…KRLL. 2 DNA-binding regions (H-T-H motif) span residues 51 to 75 and 103 to 126; these read WNAV…ANHL and WARM…NTRL. Disordered stretches follow at residues 140–254, 332–373, 396–426, and 444–470; these read DIIP…YPTL, QTAT…SHYT, QIPQ…GAHR, and LASG…NNTN. A compositionally biased stretch (basic residues) spans 147–167; sequence LHPHPHHQQQQQHNHHHHHHQ. Over residues 175–185 the composition is skewed to polar residues; that stretch reads MYFQPQSSQRN. 3 stretches are compositionally biased toward low complexity: residues 202–212, 223–232, and 341–368; these read SSSSFTFHTTT, TPNTPSQLSS, and NPYS…PSFL. The segment covering 396-410 has biased composition (polar residues); that stretch reads QIPQIDGFNNVNNFT.

As to expression, expressed in pollen grains and pollen tube. Mostly expressed in mature pollen grains, and, to a lower extent, in inflorescences and siliques.

It is found in the nucleus. Its function is as follows. Transcription activator. Binds to 5'-CAACTGTC-3' and/or 5'-TAACAAA-3' motif in target gene promoter to promote their expression. Together with MYB97 and MYB101, functions as a male factor that controls pollen tube-synergid interaction in fertilization. Required for pollen tube growth arrest and sperm cell release in the female gametophyte, probably via the regulation of pollen tube-specific gene expression. The protein is Transcription factor MYB120 of Arabidopsis thaliana (Mouse-ear cress).